Consider the following 68-residue polypeptide: UPF0253 protein VFMJ11_0680 (68 aa).

Belongs to the UPF0253 family.

This is UPF0253 protein VFMJ11_0680 from Aliivibrio fischeri (strain MJ11) (Vibrio fischeri).